A 408-amino-acid chain; its full sequence is Putative glutamate--cysteine ligase 2 (408 aa).

It belongs to the glutamate--cysteine ligase type 2 family. YbdK subfamily.

It carries out the reaction L-cysteine + L-glutamate + ATP = gamma-L-glutamyl-L-cysteine + ADP + phosphate + H(+). ATP-dependent carboxylate-amine ligase which exhibits weak glutamate--cysteine ligase activity. This Bradyrhizobium sp. (strain ORS 278) protein is Putative glutamate--cysteine ligase 2.